The following is a 36-amino-acid chain: MLIFIIHYHRHLALHLMGAFQKHSNSISPPPRKGFI.

This is an uncharacterized protein from Saccharomyces cerevisiae (strain ATCC 204508 / S288c) (Baker's yeast).